A 195-amino-acid chain; its full sequence is dTTP/UTP pyrophosphatase (195 aa).

Catalysis depends on Asp73, which acts as the Proton acceptor.

This sequence belongs to the Maf family. YhdE subfamily. A divalent metal cation is required as a cofactor.

It localises to the cytoplasm. It carries out the reaction dTTP + H2O = dTMP + diphosphate + H(+). It catalyses the reaction UTP + H2O = UMP + diphosphate + H(+). Functionally, nucleoside triphosphate pyrophosphatase that hydrolyzes dTTP and UTP. May have a dual role in cell division arrest and in preventing the incorporation of modified nucleotides into cellular nucleic acids. This chain is dTTP/UTP pyrophosphatase, found in Deinococcus radiodurans (strain ATCC 13939 / DSM 20539 / JCM 16871 / CCUG 27074 / LMG 4051 / NBRC 15346 / NCIMB 9279 / VKM B-1422 / R1).